A 55-amino-acid chain; its full sequence is uncharacterized protein (55 aa).

The chain crosses the membrane as a helical span at residues 27 to 44 (SFWFILISASSFLIYSLF).

The protein localises to the membrane. This is an uncharacterized protein from Dictyostelium discoideum (Social amoeba).